We begin with the raw amino-acid sequence, 323 residues long: ATP synthase gamma chain (323 aa).

It belongs to the ATPase gamma chain family. F-type ATPases have 2 components, CF(1) - the catalytic core - and CF(0) - the membrane proton channel. CF(1) has five subunits: alpha(3), beta(3), gamma(1), delta(1), epsilon(1). CF(0) has three main subunits: a, b and c.

The protein localises to the cell membrane. In terms of biological role, produces ATP from ADP in the presence of a proton gradient across the membrane. The gamma chain is believed to be important in regulating ATPase activity and the flow of protons through the CF(0) complex. The polypeptide is ATP synthase gamma chain (Nocardia farcinica (strain IFM 10152)).